Here is a 288-residue protein sequence, read N- to C-terminus: Acetyl-coenzyme A carboxylase carboxyl transferase subunit beta (288 aa).

The CoA carboxyltransferase N-terminal domain occupies Leu-32–Val-288. Positions 36, 39, 54, and 57 each coordinate Zn(2+). Residues Cys-36 to Cys-57 form a C4-type zinc finger.

Belongs to the AccD/PCCB family. In terms of assembly, acetyl-CoA carboxylase is a heterohexamer composed of biotin carboxyl carrier protein (AccB), biotin carboxylase (AccC) and two subunits each of ACCase subunit alpha (AccA) and ACCase subunit beta (AccD). Requires Zn(2+) as cofactor.

It localises to the cytoplasm. The catalysed reaction is N(6)-carboxybiotinyl-L-lysyl-[protein] + acetyl-CoA = N(6)-biotinyl-L-lysyl-[protein] + malonyl-CoA. It functions in the pathway lipid metabolism; malonyl-CoA biosynthesis; malonyl-CoA from acetyl-CoA: step 1/1. Component of the acetyl coenzyme A carboxylase (ACC) complex. Biotin carboxylase (BC) catalyzes the carboxylation of biotin on its carrier protein (BCCP) and then the CO(2) group is transferred by the transcarboxylase to acetyl-CoA to form malonyl-CoA. This is Acetyl-coenzyme A carboxylase carboxyl transferase subunit beta from Lactococcus lactis subsp. lactis (strain IL1403) (Streptococcus lactis).